Reading from the N-terminus, the 40-residue chain is Cytolysin EnT (40 aa).

The plays an important role in the hemolytic activity stretch occupies residues 3 to 12 (ALAGTIIEGA). Positions 11–30 (GASLTFSVLTTILDALGSVS) are N-terminal region.

This sequence belongs to the actinoporin family. Sea anemone subfamily. Octamer or nonamer in membranes. Monomer in the soluble state.

The protein localises to the secreted. Its subcellular location is the nematocyst. It localises to the target cell membrane. In terms of biological role, pore-forming protein that forms cations-selective hydrophilic pores of around 1 nm and causes cytolysis. Pore formation is a multi-step process that involves specific recognition of membrane sphingomyelin (but neither cholesterol nor phosphatidylcholine) using aromatic rich region and adjacent phosphocholine (POC) binding site, firm binding to the membrane (mainly driven by hydrophobic interactions) accompanied by the transfer of the N-terminal region to the lipid-water interface and finally pore formation after oligomerization of monomers. This toxin shows hemolytic activities. In Entacmaea quadricolor (Bubble-tip anemone), this protein is Cytolysin EnT.